A 604-amino-acid polypeptide reads, in one-letter code: Sulfite reductase [NADPH] flavoprotein alpha-component (604 aa).

The Flavodoxin-like domain maps to 66–204 (VTVLSASQTG…AADGWTGRIV (139 aa)). FMN is bound by residues 72-77 (SQTGNA), 119-122 (STQG), and 155-164 (LGDSSYPNFC). Residues 212–231 (AKNRATPAPQTTPPAGLQTA) are disordered. The span at 216-231 (ATPAPQTTPPAGLQTA) shows a compositional bias: low complexity. The FAD-binding FR-type domain occupies 239–453 (ADPFPAALLA…VERNDGFRLP (215 aa)). FAD contacts are provided by residues Thr-327, Gln-361, 391–394 (RLYS), 409–411 (TVG), and 424–427 (GGAS). NADP(+) contacts are provided by residues 524–525 (SR), 530–534 (KIYVQ), and Asp-566. Position 604 (Tyr-604) interacts with FAD.

It belongs to the NADPH-dependent sulphite reductase flavoprotein subunit CysJ family. This sequence in the N-terminal section; belongs to the flavodoxin family. In the C-terminal section; belongs to the flavoprotein pyridine nucleotide cytochrome reductase family. Alpha(8)-beta(8). The alpha component is a flavoprotein, the beta component is a hemoprotein. It depends on FAD as a cofactor. Requires FMN as cofactor.

The enzyme catalyses hydrogen sulfide + 3 NADP(+) + 3 H2O = sulfite + 3 NADPH + 4 H(+). Its pathway is sulfur metabolism; hydrogen sulfide biosynthesis; hydrogen sulfide from sulfite (NADPH route): step 1/1. Functionally, component of the sulfite reductase complex that catalyzes the 6-electron reduction of sulfite to sulfide. This is one of several activities required for the biosynthesis of L-cysteine from sulfate. The flavoprotein component catalyzes the electron flow from NADPH -&gt; FAD -&gt; FMN to the hemoprotein component. This Neisseria meningitidis serogroup C / serotype 2a (strain ATCC 700532 / DSM 15464 / FAM18) protein is Sulfite reductase [NADPH] flavoprotein alpha-component.